Consider the following 425-residue polypeptide: Nuclear pore complex-interacting protein family member B6 (425 aa).

The segment at 332-414 is disordered; that stretch reads SPLPPSVDDN…RRLSKLRTRH (83 aa). Over residues 353–395 the composition is skewed to basic and acidic residues; that stretch reads EVEKPPKPKRWRVDEVEQSPKPKRRRVDEVEQSPKPKRQREAE. A compositionally biased stretch (basic residues) spans 401 to 414; that stretch reads KPKRRRLSKLRTRH.

This sequence belongs to the NPIP family.

The chain is Nuclear pore complex-interacting protein family member B6 (NPIPB6) from Homo sapiens (Human).